The primary structure comprises 279 residues: UPF0276 protein SO_2008 (279 aa).

This sequence belongs to the UPF0276 family.

The protein is UPF0276 protein SO_2008 of Shewanella oneidensis (strain ATCC 700550 / JCM 31522 / CIP 106686 / LMG 19005 / NCIMB 14063 / MR-1).